The primary structure comprises 460 residues: Putative movement protein (460 aa).

Disordered regions lie at residues 267-314 (SGSK…SDFE) and 349-460 (RQNQ…PSGL). Positions 368-379 (RKSKGISGRRKQ) are enriched in basic residues.

The protein belongs to the tobamoviruses movement protein family.

In terms of biological role, suppressor of viral-induced RNA silencing. The polypeptide is Putative movement protein (Crataegus (hawthorn)).